The primary structure comprises 120 residues: MKRVMFHAKIHRATVTQADLHYVGSVTVDQDLLDAAGILPFEQVDIYDITNGARLTTYALPGERGSGVIGINGAAAHLVKPGDLVILVAYGVFDEEEARNLKPTVVLVDERNRILEVRKG.

Residue Ser25 is the Schiff-base intermediate with substrate; via pyruvic acid of the active site. The residue at position 25 (Ser25) is a Pyruvic acid (Ser). A substrate-binding site is contributed by Thr57. Tyr58 serves as the catalytic Proton donor. A substrate-binding site is contributed by 73 to 75 (GAA).

It belongs to the PanD family. Heterooctamer of four alpha and four beta subunits. Pyruvate is required as a cofactor. Post-translationally, is synthesized initially as an inactive proenzyme, which is activated by self-cleavage at a specific serine bond to produce a beta-subunit with a hydroxyl group at its C-terminus and an alpha-subunit with a pyruvoyl group at its N-terminus.

Its subcellular location is the cytoplasm. The enzyme catalyses L-aspartate + H(+) = beta-alanine + CO2. The protein operates within cofactor biosynthesis; (R)-pantothenate biosynthesis; beta-alanine from L-aspartate: step 1/1. Catalyzes the pyruvoyl-dependent decarboxylation of aspartate to produce beta-alanine. In Thermus thermophilus (strain ATCC 27634 / DSM 579 / HB8), this protein is Aspartate 1-decarboxylase.